The chain runs to 963 residues: VPS35 endosomal protein-sorting factor-like (963 aa).

2 disordered regions span residues 38–71 (ITVTDSKSRRGGRKGSTSSSSSSSSSVAPDPLSS) and 85–111 (ASETPTLPHSVSAGELGRKRKEKEEEV). Residues 52–63 (GSTSSSSSSSSS) are compositionally biased toward low complexity.

It belongs to the VPS35L family. Component of the heterotrimeric retriever complex.

It is found in the endosome. Acts as a component of the retriever complex. The retriever complex is a heterotrimeric complex related to retromer cargo-selective complex (CSC) and essential for retromer-independent retrieval and recycling of numerous cargos such as integrins. The recruitment of the retriever complex to the endosomal membrane involves CCC and WASH complexes. In the endosomes, drives the retrieval and recycling of NxxY-motif-containing cargo proteins by coupling to SNX17, a cargo essential for the homeostatic maintenance of numerous cell surface proteins associated with processes that include cell migration, cell adhesion, nutrient supply and cell signaling. May be involved in copper-dependent atp7a trafficking between the trans-Golgi network and vesicles in the cell periphery. This is VPS35 endosomal protein-sorting factor-like (vps35l) from Danio rerio (Zebrafish).